Consider the following 342-residue polypeptide: S-adenosylmethionine:tRNA ribosyltransferase-isomerase (342 aa).

This sequence belongs to the QueA family. As to quaternary structure, monomer.

It is found in the cytoplasm. The enzyme catalyses 7-aminomethyl-7-carbaguanosine(34) in tRNA + S-adenosyl-L-methionine = epoxyqueuosine(34) in tRNA + adenine + L-methionine + 2 H(+). It functions in the pathway tRNA modification; tRNA-queuosine biosynthesis. Functionally, transfers and isomerizes the ribose moiety from AdoMet to the 7-aminomethyl group of 7-deazaguanine (preQ1-tRNA) to give epoxyqueuosine (oQ-tRNA). The polypeptide is S-adenosylmethionine:tRNA ribosyltransferase-isomerase (Oceanobacillus iheyensis (strain DSM 14371 / CIP 107618 / JCM 11309 / KCTC 3954 / HTE831)).